The sequence spans 386 residues: MAP kinase-activated protein kinase 2 (386 aa).

A disordered region spans residues 1–29; that stretch reads MLSGSPGQTPPAPFPSPPPPAPAQPPPPF. Over residues 8–29 the composition is skewed to pro residues; the sequence is QTPPAPFPSPPPPAPAQPPPPF. The 262-residue stretch at 50–311 folds into the Protein kinase domain; sequence KVTSQVLGLG…ITEFMNHPWI (262 aa). ATP is bound by residues 56–64 and Lys79; that span reads LGLGINGKV. 125–127 is a binding site for staurosporine; the sequence is ECL. Asp172 serves as the catalytic Proton acceptor. Thr208 is subject to Phosphothreonine; by MAPK14. Ser258 carries the phosphoserine; by MAPK14 modification. A Phosphoserine; by autocatalysis modification is found at Ser314. The tract at residues 314–350 is autoinhibitory helix; that stretch reads STKVPQTPLHTSRVLKEDKERWEDVKEEMTSALATMR. Position 320 is a phosphothreonine; by MAPK14 (Thr320). 2 consecutive short sequence motifs (nuclear export signal (NES)) follow at residues 331–354 and 342–351; these read DKER…VDYE and MTSALATMRV. Residue Lys339 forms a Glycyl lysine isopeptide (Lys-Gly) (interchain with G-Cter in SUMO) linkage. The p38 MAPK-binding site stretch occupies residues 352-376; it reads DYEQIKIKKIEDASNPLLLKRRKKA. 2 consecutive short sequence motifs (bipartite nuclear localization signal) follow at residues 357 to 360 and 371 to 375; these read KIKK and KRRKK.

It belongs to the protein kinase superfamily. CAMK Ser/Thr protein kinase family. Heterodimer with p38-alpha/MAPK14; this heterodimer forms a stable complex: molecules are positioned 'face to face' so that the ATP-binding sites of both kinases are at the heterodimer interface. Interacts with PHC2. Interacts with HSF1. In terms of processing, sumoylation inhibits the protein kinase activity. Post-translationally, phosphorylated and activated by MAP kinase p38-alpha/MAPK14 at Thr-208; Ser-258 and Thr-320. As to expression, ubiquitously expressed (at protein level).

The protein resides in the cytoplasm. Its subcellular location is the nucleus. It carries out the reaction L-seryl-[protein] + ATP = O-phospho-L-seryl-[protein] + ADP + H(+). It catalyses the reaction L-threonyl-[protein] + ATP = O-phospho-L-threonyl-[protein] + ADP + H(+). With respect to regulation, activated following phosphorylation by p38-alpha/MAPK14 following various stresses. Inhibited following sumoylation. Specifically inhibited by pyrrolopyridine inhibitors. Its function is as follows. Stress-activated serine/threonine-protein kinase involved in cytokine production, endocytosis, reorganization of the cytoskeleton, cell migration, cell cycle control, chromatin remodeling, DNA damage response and transcriptional regulation. Following stress, it is phosphorylated and activated by MAP kinase p38-alpha/MAPK14, leading to phosphorylation of substrates. Phosphorylates serine in the peptide sequence, Hyd-X-R-X(2)-S, where Hyd is a large hydrophobic residue. Phosphorylates ALOX5, CDC25B, CDC25C, CEP131, ELAVL1, HNRNPA0, HSP27/HSPB1, KRT18, KRT20, LIMK1, LSP1, PABPC1, PARN, PDE4A, RCSD1, RPS6KA3, TAB3 and TTP/ZFP36. Phosphorylates HSF1; leading to the interaction with HSP90 proteins and inhibiting HSF1 homotrimerization, DNA-binding and transactivation activities. Mediates phosphorylation of HSP27/HSPB1 in response to stress, leading to dissociation of HSP27/HSPB1 from large small heat-shock protein (sHsps) oligomers and impairment of their chaperone activities and ability to protect against oxidative stress effectively. Involved in inflammatory response by regulating tumor necrosis factor (TNF) and IL6 production post-transcriptionally: acts by phosphorylating AU-rich elements (AREs)-binding proteins ELAVL1, HNRNPA0, PABPC1 and TTP/ZFP36, leading to regulation of the stability and translation of TNF and IL6 mRNAs. Phosphorylation of TTP/ZFP36, a major post-transcriptional regulator of TNF, promotes its binding to 14-3-3 proteins and reduces its ARE mRNA affinity leading to inhibition of dependent degradation of ARE-containing transcripts. Phosphorylates CEP131 in response to cellular stress following ultraviolet irradiation which promotes binding of CEP131 to 14-3-3 proteins and inhibits formation of novel centriolar satellites. Also involved in late G2/M checkpoint following DNA damage through a process of post-transcriptional mRNA stabilization: following DNA damage, relocalizes from nucleus to cytoplasm and phosphorylates HNRNPA0 and PARN, leading to stabilization of GADD45A mRNA. Involved in toll-like receptor signaling pathway (TLR) in dendritic cells: required for acute TLR-induced macropinocytosis by phosphorylating and activating RPS6KA3. This chain is MAP kinase-activated protein kinase 2 (Mapkapk2), found in Mus musculus (Mouse).